We begin with the raw amino-acid sequence, 236 residues long: Ubiquinone biosynthesis O-methyltransferase (236 aa).

S-adenosyl-L-methionine is bound by residues R40, G59, D80, and L124.

This sequence belongs to the methyltransferase superfamily. UbiG/COQ3 family.

It catalyses the reaction a 3-demethylubiquinol + S-adenosyl-L-methionine = a ubiquinol + S-adenosyl-L-homocysteine + H(+). The enzyme catalyses a 3-(all-trans-polyprenyl)benzene-1,2-diol + S-adenosyl-L-methionine = a 2-methoxy-6-(all-trans-polyprenyl)phenol + S-adenosyl-L-homocysteine + H(+). It functions in the pathway cofactor biosynthesis; ubiquinone biosynthesis. O-methyltransferase that catalyzes the 2 O-methylation steps in the ubiquinone biosynthetic pathway. The chain is Ubiquinone biosynthesis O-methyltransferase from Saccharophagus degradans (strain 2-40 / ATCC 43961 / DSM 17024).